The following is a 317-amino-acid chain: Ribosomal protein L11 methyltransferase (317 aa).

4 residues coordinate S-adenosyl-L-methionine: threonine 158, glycine 179, aspartate 201, and asparagine 244.

Belongs to the methyltransferase superfamily. PrmA family.

The protein resides in the cytoplasm. The enzyme catalyses L-lysyl-[protein] + 3 S-adenosyl-L-methionine = N(6),N(6),N(6)-trimethyl-L-lysyl-[protein] + 3 S-adenosyl-L-homocysteine + 3 H(+). Its function is as follows. Methylates ribosomal protein L11. The protein is Ribosomal protein L11 methyltransferase of Streptococcus equi subsp. zooepidemicus (strain H70).